Reading from the N-terminus, the 266-residue chain is 4-hydroxy-tetrahydrodipicolinate reductase (266 aa).

Position 10–15 (10–15) interacts with NAD(+); the sequence is GPRGRM. Lysine 38 is an NADP(+) binding site. Residues 99–101 and 125–128 each bind NAD(+); these read GTT and APNF. Histidine 155 acts as the Proton donor/acceptor in catalysis. Position 156 (histidine 156) interacts with (S)-2,3,4,5-tetrahydrodipicolinate. Catalysis depends on lysine 159, which acts as the Proton donor. 165-166 provides a ligand contact to (S)-2,3,4,5-tetrahydrodipicolinate; sequence GT.

It belongs to the DapB family.

The protein localises to the cytoplasm. It catalyses the reaction (S)-2,3,4,5-tetrahydrodipicolinate + NAD(+) + H2O = (2S,4S)-4-hydroxy-2,3,4,5-tetrahydrodipicolinate + NADH + H(+). It carries out the reaction (S)-2,3,4,5-tetrahydrodipicolinate + NADP(+) + H2O = (2S,4S)-4-hydroxy-2,3,4,5-tetrahydrodipicolinate + NADPH + H(+). Its pathway is amino-acid biosynthesis; L-lysine biosynthesis via DAP pathway; (S)-tetrahydrodipicolinate from L-aspartate: step 4/4. In terms of biological role, catalyzes the conversion of 4-hydroxy-tetrahydrodipicolinate (HTPA) to tetrahydrodipicolinate. The protein is 4-hydroxy-tetrahydrodipicolinate reductase of Bacillus cereus (strain Q1).